The following is a 101-amino-acid chain: RNA-binding protein Hfq (101 aa).

Positions 9–68 (DPFLNALRRERVPVSIYLVNGIKLQGQIESFDQFVILLKNTVSQMVYKHAISTVVPSRPV) constitute a Sm domain. The segment at 63–101 (VPSRPVSHHNNNPSGGSSNYHHGSTPASQPSQPESDDAE) is disordered. Over residues 70–86 (HHNNNPSGGSSNYHHGS) the composition is skewed to low complexity.

This sequence belongs to the Hfq family. Homohexamer.

Its function is as follows. RNA chaperone that binds small regulatory RNA (sRNAs) and mRNAs to facilitate mRNA translational regulation in response to envelope stress, environmental stress and changes in metabolite concentrations. Also binds with high specificity to tRNAs. In Sodalis glossinidius (strain morsitans), this protein is RNA-binding protein Hfq.